Reading from the N-terminus, the 66-residue chain is MLILTRRVGETLMIGDDVSVTVLGVKGNQVRIGVNAPRDVSVHREEIYDRIRHEKEGGPEDKGNSE.

This sequence belongs to the CsrA/RsmA family. In terms of assembly, homodimer; the beta-strands of each monomer intercalate to form a hydrophobic core, while the alpha-helices form wings that extend away from the core.

The protein resides in the cytoplasm. Functionally, a key translational regulator that binds mRNA to regulate translation initiation and/or mRNA stability. Mediates global changes in gene expression, shifting from rapid growth to stress survival by linking envelope stress, the stringent response and the catabolite repression systems. Usually binds in the 5'-UTR; binding at or near the Shine-Dalgarno sequence prevents ribosome-binding, repressing translation, binding elsewhere in the 5'-UTR can activate translation and/or stabilize the mRNA. Its function is antagonized by small RNA(s). The polypeptide is Translational regulator CsrA (Alkalilimnicola ehrlichii (strain ATCC BAA-1101 / DSM 17681 / MLHE-1)).